The primary structure comprises 372 residues: Ketol-acid reductoisomerase (NADP(+)) (372 aa).

The tract at residues 1 to 25 is disordered; that stretch reads MTETKTQTETETDEEEGTDTDTALD. Positions 10–19 are enriched in acidic residues; that stretch reads TETDEEEGTD. The KARI N-terminal Rossmann domain occupies 24 to 205; the sequence is LDTTIYYDDD…GCTRAGAIET (182 aa). Residues 49-52, S75, S77, and 107-110 each bind NADP(+); these read YGSQ and DTVQ. Residue H131 is part of the active site. Position 157 (G157) interacts with NADP(+). The 146-residue stretch at 206 to 351 folds into the KARI C-terminal knotted domain; sequence TFREETETDL…EPLRDLFAWS (146 aa). Positions 214, 218, 250, and 254 each coordinate Mg(2+). S275 is a binding site for substrate. The interval 351–372 is disordered; sequence SDNEETNDESDVVSEPEAAADD. Positions 352–372 are enriched in acidic residues; the sequence is DNEETNDESDVVSEPEAAADD.

Belongs to the ketol-acid reductoisomerase family. Mg(2+) serves as cofactor.

It catalyses the reaction (2R)-2,3-dihydroxy-3-methylbutanoate + NADP(+) = (2S)-2-acetolactate + NADPH + H(+). The catalysed reaction is (2R,3R)-2,3-dihydroxy-3-methylpentanoate + NADP(+) = (S)-2-ethyl-2-hydroxy-3-oxobutanoate + NADPH + H(+). It participates in amino-acid biosynthesis; L-isoleucine biosynthesis; L-isoleucine from 2-oxobutanoate: step 2/4. The protein operates within amino-acid biosynthesis; L-valine biosynthesis; L-valine from pyruvate: step 2/4. Involved in the biosynthesis of branched-chain amino acids (BCAA). Catalyzes an alkyl-migration followed by a ketol-acid reduction of (S)-2-acetolactate (S2AL) to yield (R)-2,3-dihydroxy-isovalerate. In the isomerase reaction, S2AL is rearranged via a Mg-dependent methyl migration to produce 3-hydroxy-3-methyl-2-ketobutyrate (HMKB). In the reductase reaction, this 2-ketoacid undergoes a metal-dependent reduction by NADPH to yield (R)-2,3-dihydroxy-isovalerate. The chain is Ketol-acid reductoisomerase (NADP(+)) from Haloquadratum walsbyi (strain DSM 16790 / HBSQ001).